We begin with the raw amino-acid sequence, 300 residues long: Tumor necrosis factor receptor superfamily member 6B (300 aa).

The first 29 residues, 1–29 (MRALEGPGLSLLCLVLALPALLPVPAVRG), serve as a signal peptide directing secretion. TNFR-Cys repeat units lie at residues 31-70 (AETP…PTTC), 72-113 (PCPP…NRAC), 115-150 (CRTG…NTQC), and 152-193 (PCPP…DTLC). Cystine bridges form between C49–C62, C52–C70, C73–C88, C91–C105, C95–C113, C115–C126, C132–C150, and C153–C168. N173 is a glycosylation site (N-linked (GlcNAc...) asparagine). Residues C174 and C193 are joined by a disulfide bond.

Detected in fetal lung, brain and liver. Detected in adult stomach, spinal cord, lymph node, trachea, spleen, colon and lung. Highly expressed in several primary tumors from colon, stomach, rectum, esophagus and in SW480 colon carcinoma cells.

The protein localises to the secreted. In terms of biological role, decoy receptor that can neutralize the cytotoxic ligands TNFS14/LIGHT, TNFSF15 and TNFSF6/FASL. Protects against apoptosis. The sequence is that of Tumor necrosis factor receptor superfamily member 6B (TNFRSF6B) from Homo sapiens (Human).